Here is a 261-residue protein sequence, read N- to C-terminus: tRNA pseudouridine synthase A (261 aa).

The active-site Nucleophile is the aspartate 52. Tyrosine 110 provides a ligand contact to substrate.

It belongs to the tRNA pseudouridine synthase TruA family. As to quaternary structure, homodimer.

The enzyme catalyses uridine(38/39/40) in tRNA = pseudouridine(38/39/40) in tRNA. Formation of pseudouridine at positions 38, 39 and 40 in the anticodon stem and loop of transfer RNAs. The sequence is that of tRNA pseudouridine synthase A from Coxiella burnetii (strain CbuK_Q154) (Coxiella burnetii (strain Q154)).